We begin with the raw amino-acid sequence, 450 residues long: Mitochondrial distribution and morphology protein 10 (450 aa).

This sequence belongs to the MDM10 family. Component of the ER-mitochondria encounter structure (ERMES) or MDM complex, composed of MMM1, MDM10, MDM12 and MDM34. Associates with the mitochondrial outer membrane sorting assembly machinery SAM(core) complex.

It is found in the mitochondrion outer membrane. Component of the ERMES/MDM complex, which serves as a molecular tether to connect the endoplasmic reticulum and mitochondria. Components of this complex are involved in the control of mitochondrial shape and protein biogenesis and may function in phospholipid exchange. MDM10 is involved in the late assembly steps of the general translocase of the mitochondrial outer membrane (TOM complex). Functions in the TOM40-specific route of the assembly of outer membrane beta-barrel proteins, including the association of TOM40 with the receptor TOM22 and small TOM proteins. Can associate with the SAM(core) complex as well as the MDM12-MMM1 complex, both involved in late steps of the major beta-barrel assembly pathway, that is responsible for biogenesis of all outer membrane beta-barrel proteins. May act as a switch that shuttles between both complexes and channels precursor proteins into the TOM40-specific pathway. Plays a role in mitochondrial morphology and in the inheritance of mitochondria. In Paracoccidioides lutzii (strain ATCC MYA-826 / Pb01) (Paracoccidioides brasiliensis), this protein is Mitochondrial distribution and morphology protein 10.